We begin with the raw amino-acid sequence, 265 residues long: Short-chain dehydrogenase/reductase phqE (265 aa).

10 residues coordinate NADP(+): Thr23, Ser24, Ile26, Ser46, Asn47, Lys50, Asp76, Arg131, Val203, and Thr205. Residues 25–45 (GIGFAVCAAALGHGAIVTIVG) form a helical membrane-spanning segment.

Belongs to the short-chain dehydrogenases/reductases (SDR) family. It depends on NADP(+) as a cofactor.

The protein localises to the membrane. It functions in the pathway alkaloid biosynthesis. In terms of biological role, short-chain dehydrogenase/reductase; part of the gene cluster that mediates the biosynthesis of paraherquamide, a fungal indole alkaloid that belongs to a family of natural products containing a characteristic bicyclo[2.2.2]diazaoctane core. The first steps in the biosynthesis of paraherquamide is the production of the beta-methyl-proline precursor from L-isoleucine. They require oxidation of a terminally hydroxylated L-isoleucine to the corresponding aldehyde by enzymes which have still to be identified. Spontaneous cyclization and dehydration would yield the 4-methyl pyrolline-5-carboxylic acid, which is then reduced by the pyrroline-5-carboxylate reductase phqD leading to the beta-methyl-proline precursor. The next step of paraherquamide biosynthesis involves coupling of beta-methyl-proline and L-tryptophan by the bimodular NRPS phqB, to produce a monooxopiperazine intermediate. The reductase (R) domain of phqB utilizes NADPH for hydride transfer to reduce the thioester bond of the T domain-tethered linear dipeptide to a hemithioaminal intermediate, which spontaneously cleaves the C-S bond to release the aldehyde product. This compound undergoes spontaneous cyclization and dehydration to give a dienamine which is reverse prenylated at C-2 by the reverse prenyltransferase phqJ. The other prenyltransferase present in the cluster, phqI may be a redundant gene in the pathway. During biosynthetic assembly, the key step to produce the polycyclic core is catalyzed by the bifunctional reductase and intramolecular [4+2] Diels-Alderase, phqE, resulting in formation of the [2.2.2] diazaoctane intermediate preparaherquamide. Following formation of preparaherquamide, an indole 2,3-epoxidation-initiated pinacol-like rearrangement is catalyzed by the phqK FAD-dependent monooxygenase. The prenyltransferase phqA, the cytochrome P450 monooxygenase phqL, and the FAD-linked oxidoreductase phqH (or the cytochrome P450 monooxygenase phqM), are proposed to be involved in the formation of the pyran ring. The FAD-dependent monooxygenase phqK is likely responsible for generation of the spiro-oxindole, and the N-methylation is likely mediated by the phqN methyltransferase leading to the isolable natural product paraherquamide F. However, the order of these biosynthetic steps has still to be determined. In late-stage paraherquamide biosynthesis, the third P450 monooxygenase, phqO, is probably responsible for the C-14 hydroxylation, transforming paraherquamide F to paraherquamide G, and paraherquamide E to the final product paraherquamide A. The expansion from the 6-membered ring pyran (in paraherquamides F and G) to the 7-membered dioxepin ring (in paraherquamides A and E) represents a poorly understood but intriguing process that probably involves the 2-oxoglutarate-dependent dioxygenase phqC. Finally, the remaining members of the paraherquamide cluster, including phqI as well as phqM (or phqH), do not have a clearly prescribed role and appear to be redundant. The sequence is that of Short-chain dehydrogenase/reductase phqE from Penicillium fellutanum.